The sequence spans 349 residues: Hydroxymethylglutaryl-CoA synthase (349 aa).

Positions 30 and 31 each coordinate (3S)-3-hydroxy-3-methylglutaryl-CoA. Glutamate 82 (proton donor/acceptor) is an active-site residue. Cysteine 114 and threonine 155 together coordinate (3S)-3-hydroxy-3-methylglutaryl-CoA. The active-site Acyl-thioester intermediate is the cysteine 114. Position 203 (arginine 203) interacts with CoA. Residues threonine 205 and histidine 238 each coordinate (3S)-3-hydroxy-3-methylglutaryl-CoA. The active-site Proton donor/acceptor is the histidine 238. Position 243 (lysine 243) interacts with CoA. (3S)-3-hydroxy-3-methylglutaryl-CoA-binding residues include asparagine 270 and serine 300.

This sequence belongs to the thiolase-like superfamily. Archaeal HMG-CoA synthase family. In terms of assembly, interacts with acetoacetyl-CoA thiolase that catalyzes the precedent step in the pathway and with a DUF35 protein. The acetoacetyl-CoA thiolase/HMG-CoA synthase complex channels the intermediate via a fused CoA-binding site, which allows for efficient coupling of the endergonic thiolase reaction with the exergonic HMGCS reaction.

The catalysed reaction is acetoacetyl-CoA + acetyl-CoA + H2O = (3S)-3-hydroxy-3-methylglutaryl-CoA + CoA + H(+). Its pathway is metabolic intermediate biosynthesis; (R)-mevalonate biosynthesis; (R)-mevalonate from acetyl-CoA: step 2/3. Functionally, catalyzes the condensation of acetyl-CoA with acetoacetyl-CoA to form 3-hydroxy-3-methylglutaryl-CoA (HMG-CoA). Functions in the mevalonate (MVA) pathway leading to isopentenyl diphosphate (IPP), a key precursor for the biosynthesis of isoprenoid compounds that are building blocks of archaeal membrane lipids. This chain is Hydroxymethylglutaryl-CoA synthase, found in Methanococcus maripaludis (strain C7 / ATCC BAA-1331).